Here is a 191-residue protein sequence, read N- to C-terminus: Guanylate kinase (191 aa).

Residues 10-188 form the Guanylate kinase-like domain; that stretch reads GQLIVLTGPS…ALHRLVKLIG (179 aa). An ATP-binding site is contributed by 17-24; that stretch reads GPSGVGKG.

It belongs to the guanylate kinase family.

The protein resides in the cytoplasm. It catalyses the reaction GMP + ATP = GDP + ADP. In terms of biological role, essential for recycling GMP and indirectly, cGMP. This is Guanylate kinase (gmk) from Synechocystis sp. (strain ATCC 27184 / PCC 6803 / Kazusa).